The primary structure comprises 394 residues: Carbamoyl phosphate synthase small chain (394 aa).

The segment at 1–188 is CPSase; the sequence is MIRKERAILA…PLPYAFPTLR (188 aa). L-glutamine is bound by residues Ser-49, Gly-240, and Gly-242. The 188-residue stretch at 192–379 folds into the Glutamine amidotransferase type-1 domain; it reads RVVLMDFGIK…IEEIDAFEGA (188 aa). Cys-267 acts as the Nucleophile in catalysis. 5 residues coordinate L-glutamine: Leu-268, Gln-271, Asn-309, Gly-311, and Tyr-312. Residues His-352 and Glu-354 contribute to the active site.

It belongs to the CarA family. In terms of assembly, composed of two chains; the small (or glutamine) chain promotes the hydrolysis of glutamine to ammonia, which is used by the large (or ammonia) chain to synthesize carbamoyl phosphate. Tetramer of heterodimers (alpha,beta)4.

It carries out the reaction hydrogencarbonate + L-glutamine + 2 ATP + H2O = carbamoyl phosphate + L-glutamate + 2 ADP + phosphate + 2 H(+). The catalysed reaction is L-glutamine + H2O = L-glutamate + NH4(+). It participates in amino-acid biosynthesis; L-arginine biosynthesis; carbamoyl phosphate from bicarbonate: step 1/1. The protein operates within pyrimidine metabolism; UMP biosynthesis via de novo pathway; (S)-dihydroorotate from bicarbonate: step 1/3. In terms of biological role, small subunit of the glutamine-dependent carbamoyl phosphate synthetase (CPSase). CPSase catalyzes the formation of carbamoyl phosphate from the ammonia moiety of glutamine, carbonate, and phosphate donated by ATP, constituting the first step of 2 biosynthetic pathways, one leading to arginine and/or urea and the other to pyrimidine nucleotides. The small subunit (glutamine amidotransferase) binds and cleaves glutamine to supply the large subunit with the substrate ammonia. This is Carbamoyl phosphate synthase small chain from Deinococcus geothermalis (strain DSM 11300 / CIP 105573 / AG-3a).